Here is a 989-residue protein sequence, read N- to C-terminus: Phosphoenolpyruvate carboxylase (989 aa).

Catalysis depends on residues His175 and Lys630.

Belongs to the PEPCase type 1 family. Requires Mg(2+) as cofactor.

The catalysed reaction is oxaloacetate + phosphate = phosphoenolpyruvate + hydrogencarbonate. Functionally, forms oxaloacetate, a four-carbon dicarboxylic acid source for the tricarboxylic acid cycle. This Prochlorococcus marinus (strain MIT 9215) protein is Phosphoenolpyruvate carboxylase.